The following is a 350-amino-acid chain: Small ribosomal subunit biogenesis GTPase RsgA (350 aa).

Positions 1 to 17 (MSKNKLSKGQQRRVNAN) are enriched in polar residues. The interval 1–33 (MSKNKLSKGQQRRVNANHQRRLKTSKEKPDYDD) is disordered. The 170-residue stretch at 104–273 (TSVLTRPDFY…VIDSPGVREF (170 aa)) folds into the CP-type G domain. Residues 160 to 163 (NKID) and 214 to 222 (GQSGVGKSS) contribute to the GTP site. Positions 297, 302, 304, and 310 each coordinate Zn(2+).

It belongs to the TRAFAC class YlqF/YawG GTPase family. RsgA subfamily. As to quaternary structure, monomer. Associates with 30S ribosomal subunit, binds 16S rRNA. Zn(2+) serves as cofactor.

The protein resides in the cytoplasm. One of several proteins that assist in the late maturation steps of the functional core of the 30S ribosomal subunit. Helps release RbfA from mature subunits. May play a role in the assembly of ribosomal proteins into the subunit. Circularly permuted GTPase that catalyzes slow GTP hydrolysis, GTPase activity is stimulated by the 30S ribosomal subunit. This Escherichia coli (strain ATCC 8739 / DSM 1576 / NBRC 3972 / NCIMB 8545 / WDCM 00012 / Crooks) protein is Small ribosomal subunit biogenesis GTPase RsgA.